Here is a 241-residue protein sequence, read N- to C-terminus: Ribosomal RNA small subunit methyltransferase J (241 aa).

S-adenosyl-L-methionine is bound by residues 94–95 (RD) and D163.

Belongs to the methyltransferase superfamily. RsmJ family.

It localises to the cytoplasm. The catalysed reaction is guanosine(1516) in 16S rRNA + S-adenosyl-L-methionine = N(2)-methylguanosine(1516) in 16S rRNA + S-adenosyl-L-homocysteine + H(+). Functionally, specifically methylates the guanosine in position 1516 of 16S rRNA. In Francisella tularensis subsp. novicida (strain U112), this protein is Ribosomal RNA small subunit methyltransferase J.